The primary structure comprises 129 residues: Small ribosomal subunit protein uS11 (129 aa).

It belongs to the universal ribosomal protein uS11 family. Part of the 30S ribosomal subunit. Interacts with proteins S7 and S18. Binds to IF-3.

Functionally, located on the platform of the 30S subunit, it bridges several disparate RNA helices of the 16S rRNA. Forms part of the Shine-Dalgarno cleft in the 70S ribosome. The protein is Small ribosomal subunit protein uS11 of Haemophilus influenzae (strain ATCC 51907 / DSM 11121 / KW20 / Rd).